We begin with the raw amino-acid sequence, 764 residues long: MTQEVDTVERAAATPDHPQPYRELGLKDDEYERIREILGRRPTDAELAMYSVMWSEHCSYKSSKVHLRYFGETTTEKMRETMLAGIGENAGVVDIGDGWAATFKVESHNHPSYIEPYQGAATGVGGIVRDIMAMGARPVAVMDQLRFGAADAPDTRRVLDGVVRGIGGYGNSLGLPNIGGETVFDASYAGNPLVNALCVGVLRKEDLKLAFASGAGNKIILFGARTGLDGIGGVSVLASETFGGDESGAGRKKLPSVQVGDPFTEKVLIECCLELYAADLVVGIQDLGGAGLSCATSELASAGDGGMRVELERVPLRAANMTPAEILSSESQERMCAVVTPDNVDAFMAVCRKWDVLATDIGEVTDSGRLEITWHGETVVDVPPRTVAHEGPVYERPVQRPDSQDALVANTTASLERPSTGDELRATLLQLLGSPALCSRAFITEQYDRYVRGNTVLAEHADGGVLRVDEQTGRGIAISTDASGRYTALDPYAGAQLALAEAYRNVAVTGATPVAVTNCLNFGSPEDPGVMWQFSQAVRGLADGAAALGIPVTGGNVSFYNQTGTTAILPTPVVGVLGVIDDVKRRIPTGFGTEPGETLILLGDTRDEFDGSIWAQVTADHLGGVPPTVDLDRERLLAEVLTAASRDGLVSAAHDLSEGGLIQAVVEASLAGETGCRIVLPEGWNPFVTLFSESAGRVLVAVPRTEESRFTAMCEARGLPANRIGVVDQGPDGGEPAVEVQGLFTVTLEELRRTSEGVLPGLFG.

Residues 1-23 (MTQEVDTVERAAATPDHPQPYRE) are disordered. Residue His57 is part of the active site. ATP contacts are provided by Tyr60 and Lys104. Mg(2+) is bound at residue Glu106. Substrate is bound by residues 107–110 (SHNH) and Arg129. The active-site Proton acceptor is His108. Mg(2+) is bound at residue Asp130. Residue Gln258 coordinates substrate. Asp286 is a Mg(2+) binding site. Substrate is bound at residue 330–332 (ESQ). 2 residues coordinate ATP: Asn518 and Gly555. Asn556 contributes to the Mg(2+) binding site. Residue Ser558 coordinates substrate.

It belongs to the FGAMS family. Monomer. Part of the FGAM synthase complex composed of 1 PurL, 1 PurQ and 2 PurS subunits.

The protein localises to the cytoplasm. It carries out the reaction N(2)-formyl-N(1)-(5-phospho-beta-D-ribosyl)glycinamide + L-glutamine + ATP + H2O = 2-formamido-N(1)-(5-O-phospho-beta-D-ribosyl)acetamidine + L-glutamate + ADP + phosphate + H(+). It participates in purine metabolism; IMP biosynthesis via de novo pathway; 5-amino-1-(5-phospho-D-ribosyl)imidazole from N(2)-formyl-N(1)-(5-phospho-D-ribosyl)glycinamide: step 1/2. Its function is as follows. Part of the phosphoribosylformylglycinamidine synthase complex involved in the purines biosynthetic pathway. Catalyzes the ATP-dependent conversion of formylglycinamide ribonucleotide (FGAR) and glutamine to yield formylglycinamidine ribonucleotide (FGAM) and glutamate. The FGAM synthase complex is composed of three subunits. PurQ produces an ammonia molecule by converting glutamine to glutamate. PurL transfers the ammonia molecule to FGAR to form FGAM in an ATP-dependent manner. PurS interacts with PurQ and PurL and is thought to assist in the transfer of the ammonia molecule from PurQ to PurL. The chain is Phosphoribosylformylglycinamidine synthase subunit PurL from Mycolicibacterium vanbaalenii (strain DSM 7251 / JCM 13017 / BCRC 16820 / KCTC 9966 / NRRL B-24157 / PYR-1) (Mycobacterium vanbaalenii).